A 253-amino-acid chain; its full sequence is Ubiquinone/menaquinone biosynthesis C-methyltransferase UbiE (253 aa).

S-adenosyl-L-methionine contacts are provided by residues threonine 76, aspartate 97, and 125 to 126; that span reads NA.

This sequence belongs to the class I-like SAM-binding methyltransferase superfamily. MenG/UbiE family.

It carries out the reaction a 2-demethylmenaquinol + S-adenosyl-L-methionine = a menaquinol + S-adenosyl-L-homocysteine + H(+). The enzyme catalyses a 2-methoxy-6-(all-trans-polyprenyl)benzene-1,4-diol + S-adenosyl-L-methionine = a 5-methoxy-2-methyl-3-(all-trans-polyprenyl)benzene-1,4-diol + S-adenosyl-L-homocysteine + H(+). It participates in quinol/quinone metabolism; menaquinone biosynthesis; menaquinol from 1,4-dihydroxy-2-naphthoate: step 2/2. It functions in the pathway cofactor biosynthesis; ubiquinone biosynthesis. Methyltransferase required for the conversion of demethylmenaquinol (DMKH2) to menaquinol (MKH2) and the conversion of 2-polyprenyl-6-methoxy-1,4-benzoquinol (DDMQH2) to 2-polyprenyl-3-methyl-6-methoxy-1,4-benzoquinol (DMQH2). The protein is Ubiquinone/menaquinone biosynthesis C-methyltransferase UbiE of Bradyrhizobium diazoefficiens (strain JCM 10833 / BCRC 13528 / IAM 13628 / NBRC 14792 / USDA 110).